We begin with the raw amino-acid sequence, 119 residues long: uncharacterized protein (119 aa).

A coiled-coil region spans residues 6-36 (QAYLDIQGKIAEFRREIKALRVEEKAITANL). Positions 95-119 (AVTGSSSNVKIRKSAPARNEEDDDG) are disordered.

This is an uncharacterized protein from Frog virus 3 (isolate Goorha) (FV-3).